The chain runs to 333 residues: L-lactate dehydrogenase B chain (333 aa).

Residues G29–K57 and R99 contribute to the NAD(+) site. R106, N138, and R169 together coordinate substrate. N138 is a binding site for NAD(+). H193 (proton acceptor) is an active-site residue. T248 is a binding site for substrate.

This sequence belongs to the LDH/MDH superfamily. LDH family. As to quaternary structure, homotetramer.

It localises to the cytoplasm. It catalyses the reaction (S)-lactate + NAD(+) = pyruvate + NADH + H(+). The protein operates within fermentation; pyruvate fermentation to lactate; (S)-lactate from pyruvate: step 1/1. Interconverts simultaneously and stereospecifically pyruvate and lactate with concomitant interconversion of NADH and NAD(+). This chain is L-lactate dehydrogenase B chain (LDHB), found in Gallus gallus (Chicken).